A 207-amino-acid chain; its full sequence is Small ribosomal subunit protein uS4 (207 aa).

The disordered stretch occupies residues 31 to 55 (KCKLDSKPGQHGRTSGARTSDYGTQ). Polar residues predominate over residues 42–53 (GRTSGARTSDYG). The 64-residue stretch at 97-160 (SRLDNVVYRM…KKQARIIEAL (64 aa)) folds into the S4 RNA-binding domain.

Belongs to the universal ribosomal protein uS4 family. As to quaternary structure, part of the 30S ribosomal subunit. Contacts protein S5. The interaction surface between S4 and S5 is involved in control of translational fidelity.

One of the primary rRNA binding proteins, it binds directly to 16S rRNA where it nucleates assembly of the body of the 30S subunit. Its function is as follows. With S5 and S12 plays an important role in translational accuracy. The sequence is that of Small ribosomal subunit protein uS4 from Burkholderia multivorans (strain ATCC 17616 / 249).